The chain runs to 194 residues: Dephospho-CoA kinase (194 aa).

Residues V4–A194 form the DPCK domain. Residue G12 to T17 participates in ATP binding.

It belongs to the CoaE family.

It is found in the cytoplasm. The enzyme catalyses 3'-dephospho-CoA + ATP = ADP + CoA + H(+). Its pathway is cofactor biosynthesis; coenzyme A biosynthesis; CoA from (R)-pantothenate: step 5/5. Catalyzes the phosphorylation of the 3'-hydroxyl group of dephosphocoenzyme A to form coenzyme A. In Agrobacterium fabrum (strain C58 / ATCC 33970) (Agrobacterium tumefaciens (strain C58)), this protein is Dephospho-CoA kinase.